The chain runs to 431 residues: MAEITNIRPSFDVSPVVAGLIGASVLVVCVSVTVFVWSCCHQQAEKKQKNPPYKFIHMLKGISIYPETLSNKKKIIKVRRDKDGPGREGGRRNLLVDAAEAGLLSRDKDPRGPSSGSCIDQLPIKMDYGEELRSPITSLTPGESKTTSPSSPEEDVMLGSLTFSVDYNFPKKALVVTIQEAHGLPVMDDQTQGSDPYIKMTILPDKRHRVKTRVLRKTLDPVFDETFTFYGIPYSQLQDLVLHFLVLSFDRFSRDDVIGEVMVPLAGVDPSTGKVQLTRDIIKRNIQKCISRGELQVSLSYQPVAQRMTVVVLKARHLPKMDITGLSGNPYVKVNVYYGRKRIAKKKTHVKKCTLNPIFNESFIYDIPTDLLPDISIEFLVIDFDRTTKNEVVGRLILGAHSVTASGAEHWREVCESPRKPVAKWHSLSEY.

The Vesicular portion of the chain corresponds to 1 to 15; the sequence is MAEITNIRPSFDVSP. The helical transmembrane segment at 16 to 36 threads the bilayer; it reads VVAGLIGASVLVVCVSVTVFV. At 37-431 the chain is on the cytoplasmic side; that stretch reads WSCCHQQAEK…VAKWHSLSEY (395 aa). Ser-134 carries the post-translational modification Phosphoserine. The interval 134 to 154 is disordered; it reads SPITSLTPGESKTTSPSSPEE. A compositionally biased stretch (low complexity) spans 140-151; the sequence is TPGESKTTSPSS. C2 domains lie at 157 to 279 and 291 to 426; these read MLGS…QLTR and SRGE…AKWH. Ca(2+) is bound by residues Asp-250, Ser-253, and Asp-256.

It belongs to the synaptotagmin family. Homodimer. Can also form heterodimers. Interacts with PRKN. Interacts (via C2 2 domain) with AGO2 and SND1; the interaction with SND1 is direct. Interacts with KIF1A; the interaction increases in presence of calcium. The cofactor is Ca(2+). In terms of processing, ubiquitinated, at least by PRKN, and targeted to the proteasome complex for degradation. Ubiquitination is inhibited by ATP13A2.

It localises to the cytoplasmic vesicle membrane. The protein resides in the perikaryon. Its subcellular location is the golgi apparatus. The protein localises to the trans-Golgi network membrane. It is found in the recycling endosome membrane. It localises to the lysosome membrane. The protein resides in the cytoplasmic vesicle. Its subcellular location is the phagosome. The protein localises to the cell projection. It is found in the axon. It localises to the dendrite. The protein resides in the postsynaptic density. Its subcellular location is the clathrin-coated vesicle membrane. In terms of biological role, synaptotagmin family member involved in vesicular and membrane trafficking which does not bind Ca(2+). Inhibits clathrin-mediated and bulk endocytosis, functions to ensure precision in vesicle retrieval. Plays an important role in dopamine transmission by regulating endocytosis and the vesicle-recycling process. Essential component of a neuronal vesicular trafficking pathway that differs from the synaptic vesicle trafficking pathway but is crucial for development and synaptic plasticity. In macrophages and microglia, inhibits the conventional cytokine secretion, of at least IL6 and TNF, and phagocytosis. In astrocytes, regulates lysosome exocytosis, mechanism required for the repair of injured astrocyte cell membrane. Required for the ATP13A2-mediated regulation of the autophagy-lysosome pathway. The chain is Synaptotagmin-11 from Homo sapiens (Human).